The following is a 337-amino-acid chain: WRKY transcription factor 23 (337 aa).

A disordered region spans residues 100 to 160 (INPPATPNSS…KNNQKRQREA (61 aa)). The span at 106–118 (PNSSSISSASSEA) shows a compositional bias: low complexity. The segment covering 142-155 (HTKKQLKAKKNNQK) has biased composition (basic residues). Residues 168-233 (SEVDHLEDGY…YEGQHTHISP (66 aa)) constitute a DNA-binding region (WRKY).

Belongs to the WRKY group II-c family.

Its subcellular location is the nucleus. In terms of biological role, transcription factor. Interacts specifically with the W box (5'-(T)TGAC[CT]-3'), a frequently occurring elicitor-responsive cis-acting element. This chain is WRKY transcription factor 23 (WRKY23), found in Arabidopsis thaliana (Mouse-ear cress).